A 476-amino-acid polypeptide reads, in one-letter code: Glycogen synthase (476 aa).

Residue lysine 15 participates in ADP-alpha-D-glucose binding.

This sequence belongs to the glycosyltransferase 1 family. Bacterial/plant glycogen synthase subfamily.

The catalysed reaction is [(1-&gt;4)-alpha-D-glucosyl](n) + ADP-alpha-D-glucose = [(1-&gt;4)-alpha-D-glucosyl](n+1) + ADP + H(+). It functions in the pathway glycan biosynthesis; glycogen biosynthesis. Functionally, synthesizes alpha-1,4-glucan chains using ADP-glucose. The protein is Glycogen synthase of Streptococcus agalactiae serotype III (strain NEM316).